A 142-amino-acid chain; its full sequence is Mitochondrial import inner membrane translocase subunit TIM22-4 (142 aa).

Helical transmembrane passes span 21–41, 70–88, 97–113, and 120–137; these read VTSG…LGAL, SCKT…ECIV, TVNT…SMSA, and ACIG…IEKF.

Belongs to the Tim17/Tim22/Tim23 family.

The protein resides in the mitochondrion inner membrane. Essential core component of the TIM22 complex, a complex that mediates the import and insertion of multi-pass transmembrane proteins into the mitochondrial inner membrane. The chain is Mitochondrial import inner membrane translocase subunit TIM22-4 (TIM22-4) from Arabidopsis thaliana (Mouse-ear cress).